The primary structure comprises 693 residues: Sulfite reductase 1 [ferredoxin], chloroplastic (693 aa).

The transit peptide at 1 to 62 (MTTSFGAAIN…PSSIVRAVST (62 aa)) directs the protein to the chloroplast. [4Fe-4S] cluster contacts are provided by C502, C508, C548, and C552. Residue C552 participates in siroheme binding.

The protein belongs to the nitrite and sulfite reductase 4Fe-4S domain family. As to quaternary structure, monomer. Interacts with ferredoxin. The cofactor is siroheme. It depends on [4Fe-4S] cluster as a cofactor. Post-translationally, phosphorylated; this phosphorylation reduces DNA-binding. In terms of tissue distribution, expressed in leaves, stems, roots and petals.

It is found in the plastid. The protein resides in the chloroplast stroma. The protein localises to the chloroplast nucleoid. Its subcellular location is the plastid stroma. It carries out the reaction hydrogen sulfide + 6 oxidized [2Fe-2S]-[ferredoxin] + 3 H2O = sulfite + 6 reduced [2Fe-2S]-[ferredoxin] + 7 H(+). In terms of biological role, essential protein with sulfite reductase activity required in assimilatory sulfate reduction pathway during both primary and secondary metabolism and thus involved in development and growth. DNA-binding protein that binds to both double-stranded and single-stranded DNA without significant sequence specificity to reversibly repress the transcriptional activity of chloroplast nucleoids by promoting DNA compaction and possibly regulate DNA replication. The polypeptide is Sulfite reductase 1 [ferredoxin], chloroplastic (SIR1) (Nicotiana tabacum (Common tobacco)).